The following is an 807-amino-acid chain: MDQREILQKFLDEAQSKKITKEEFANEFLKLKRQSTKYKADKTYPTTVAEKPKNIKKNRYKDILPYDYSRVELSLITSDEDSSYINANFIKGVYGPKAYIATQGPLSTTLLDFWRMIWEYSVLIIVMACMEYEMGKKKCERYWAEPGEMQLEFGPFSVSCEAEKRKSDYIIRTLKVKFNSETRTIYQFHYKNWPDHDVPSSIDPILELIWDVRCYQEDDSVPICIHCSAGCGRTGVICAIDYTWMLLKDGIIPENFSVFSLIREMRTQRPSLVQTQEQYELVYNAVLELFKRQMDVIRDKHSGTESQAKHCIPEKNHTLQADSYSPNLPKSTTKAAKMMNQQRTKMEIKESSSFDFRTSEISAKEELVLHPAKSSTSFDFLELNYSFDKNADTTMKWQTKAFPIVGEPLQKHQSLDLGSLLFEGCSNSKPVNAAGRYFNSKVPITRTKSTPFELIQQRETKEVDSKENFSYLESQPHDSCFVEMQAQKVMHVSSAELNYSLPYDSKHQIRNASNVKHHDSSALGVYSYIPLVENPYFSSWPPSGTSSKMSLDLPEKQDGTVFPSSLLPTSSTSLFSYYNSHDSLSLNSPTNISSLLNQESAVLATAPRIDDEIPPPLPVRTPESFIVVEEAGEFSPNVPKSLSSAVKVKIGTSLEWGGTSEPKKFDDSVILRPSKSVKLRSPKSELHQDRSSPPPPLPERTLESFFLADEDCMQAQSIETYSTSYPDTMENSTSSKQTLKTPGKSFTRSKSLKILRNMKKSICNSCPPNKPAESVQSNNSSSFLNFGFANRFSKPKGPRNPPPTWNI.

The Tyrosine-protein phosphatase domain maps to 24–289 (FANEFLKLKR…ELVYNAVLEL (266 aa)). Residue S35 is modified to Phosphoserine; by PKC/PRKCD. Cysteines 129 and 227 form a disulfide. The active-site Phosphocysteine intermediate is the C227. Substrate-binding positions include 227–233 (CSAGCGR) and Q274. S449, S635, S684, and S692 each carry phosphoserine. Disordered stretches follow at residues 676–700 (SVKL…LPER) and 724–746 (SYPD…GKSF).

This sequence belongs to the protein-tyrosine phosphatase family. Non-receptor class 4 subfamily. As to quaternary structure, interacts with CSK. Interacts with LPXN. Interacts with CBL. Interacts with TRAF3 (via MATH domain); the interaction promotes TRAF3 polyubiquitination. Phosphorylation on Ser-35 by PKC/PRKCD abrogates its ability to dephosphorylate and inactivate the SRC family kinases. As to expression, expressed in bone marrow, B and T-cells, PBMCs, natural killer cells, monocytes, dendritic cells and neutrophils. Both isoform 1 and 4 are predominantly expressed in lymphoid tissues and cells. Isoform 1 is expressed in thymocytes and both mature B and T-cells.

It localises to the cytoplasm. It catalyses the reaction O-phospho-L-tyrosyl-[protein] + H2O = L-tyrosyl-[protein] + phosphate. The enzyme catalyses N-(5Z,8Z,11Z,14Z-eicosatetraenoyl)-ethanolamine phosphate + H2O = N-(5Z,8Z,11Z,14Z-eicosatetraenoyl)-ethanolamine + phosphate. With respect to regulation, down-regulated by phosphorylation. In terms of biological role, acts as a negative regulator of T-cell receptor (TCR) signaling by direct dephosphorylation of the Src family kinases LCK and FYN, ITAMs of the TCRz/CD3 complex, as well as ZAP70, VAV, VCP and other key signaling molecules. Associates with and probably dephosphorylates CBL. Dephosphorylates LCK at its activating 'Tyr-394' residue. Dephosphorylates ZAP70 at its activating 'Tyr-493' residue. Dephosphorylates the immune system activator SKAP2. Positively regulates toll-like receptor (TLR)-induced type 1 interferon production. Promotes host antiviral responses mediated by type 1 interferon. Regulates NOD2-induced pro-inflammatory cytokine secretion and autophagy. Acts as an activator of NLRP3 inflammasome assembly by mediating dephosphorylation of 'Tyr-861' of NLRP3. Dephosphorylates phospho-anandamide (p-AEA), an endocannabinoid to anandamide (also called N-arachidonoylethanolamide). The protein is Tyrosine-protein phosphatase non-receptor type 22 (PTPN22) of Homo sapiens (Human).